The following is a 138-amino-acid chain: Ribulose bisphosphate carboxylase small subunit (138 aa).

It belongs to the RuBisCO small chain family. As to quaternary structure, heterohexadecamer of 8 large and 8 small subunits.

The protein localises to the plastid. It is found in the chloroplast. Functionally, ruBisCO catalyzes two reactions: the carboxylation of D-ribulose 1,5-bisphosphate, the primary event in carbon dioxide fixation, as well as the oxidative fragmentation of the pentose substrate in the photorespiration process. Both reactions occur simultaneously and in competition at the same active site. Although the small subunit is not catalytic it is essential for maximal activity. The protein is Ribulose bisphosphate carboxylase small subunit of Cyanidium caldarium (Red alga).